A 495-amino-acid polypeptide reads, in one-letter code: Cytochrome P450 monooxygenase 113 (495 aa).

The chain crosses the membrane as a helical span at residues 2-22 (FLQIAACFTVIGLLYGLVSNL). Cysteine 428 serves as a coordination point for heme.

This sequence belongs to the cytochrome P450 family. Requires heme as cofactor.

The protein resides in the membrane. Its pathway is secondary metabolite biosynthesis. In terms of biological role, cytochrome P450 monooxygenase that is able to use 4-ethoxybenzoic acid as a substrate for oxidation. This Postia placenta (strain ATCC 44394 / Madison 698-R) (Brown rot fungus) protein is Cytochrome P450 monooxygenase 113.